The following is a 393-amino-acid chain: Cytochrome b (393 aa).

4 consecutive transmembrane segments (helical) span residues 33–53 (FGSL…FLAM), 77–98 (WFLR…YLHM), 113–133 (WNIG…GYVL), and 178–198 (FFAI…LHLL). Heme b-binding residues include histidine 83 and histidine 97. Residues histidine 182 and histidine 196 each coordinate heme b. A ubiquinone is bound at residue histidine 201. 4 helical membrane-spanning segments follow: residues 226–246 (YKDV…ALFA), 288–308 (LGGV…PFIH), 320–340 (LSQL…WIGG), and 347–367 (FIII…ILMP).

This sequence belongs to the cytochrome b family. As to quaternary structure, the cytochrome bc1 complex contains 3 respiratory subunits (MT-CYB, CYC1 and UQCRFS1), 2 core proteins (UQCRC1 and UQCRC2) and probably 6 low-molecular weight proteins. It depends on heme b as a cofactor.

Its subcellular location is the mitochondrion inner membrane. Functionally, component of the ubiquinol-cytochrome c reductase complex (complex III or cytochrome b-c1 complex) that is part of the mitochondrial respiratory chain. The b-c1 complex mediates electron transfer from ubiquinol to cytochrome c. Contributes to the generation of a proton gradient across the mitochondrial membrane that is then used for ATP synthesis. This Synbranchus marmoratus (Marbled swamp eel) protein is Cytochrome b (mt-cyb).